The sequence spans 333 residues: MDERLLSGESAYEDSDLEYSLRPQTLRQYIGQDKAKHNLEVFIEAAKMREETLDHVLLYGPPGLGKTTLANIIANEMGVNVRTTSGPAIERPGDLAAVLTALQPGDVLFIDEIHRLHRSIEEVLYPAMEDFCLDIVIGKGPSARSVRLDLPPFTLVGATTRAGALSAPLRDRFGVLSRLEYYTVDQLSAIVERTAEVFEVEIDSLAALEIARRARGTPRIANRLLRRVRDFAQVRGNGTVTMEITQMALELLQVDKLGLDHIDHKLLLGIIEKFRGGPVGLETVSATIGEESHTIEDVYEPYLLQIGFLQRTPRGRIVTPLAYEHFGMEIPKV.

The tract at residues 1–182 (MDERLLSGES…FGVLSRLEYY (182 aa)) is large ATPase domain (RuvB-L). ATP-binding positions include L21, R22, G63, K66, T67, T68, 129–131 (EDF), R172, Y182, and R219. T67 serves as a coordination point for Mg(2+). The segment at 183 to 253 (TVDQLSAIVE…ITQMALELLQ (71 aa)) is small ATPAse domain (RuvB-S). Residues 256–333 (KLGLDHIDHK…EHFGMEIPKV (78 aa)) form a head domain (RuvB-H) region. R311 and R316 together coordinate DNA.

This sequence belongs to the RuvB family. As to quaternary structure, homohexamer. Forms an RuvA(8)-RuvB(12)-Holliday junction (HJ) complex. HJ DNA is sandwiched between 2 RuvA tetramers; dsDNA enters through RuvA and exits via RuvB. An RuvB hexamer assembles on each DNA strand where it exits the tetramer. Each RuvB hexamer is contacted by two RuvA subunits (via domain III) on 2 adjacent RuvB subunits; this complex drives branch migration. In the full resolvosome a probable DNA-RuvA(4)-RuvB(12)-RuvC(2) complex forms which resolves the HJ.

Its subcellular location is the cytoplasm. It carries out the reaction ATP + H2O = ADP + phosphate + H(+). Its function is as follows. The RuvA-RuvB-RuvC complex processes Holliday junction (HJ) DNA during genetic recombination and DNA repair, while the RuvA-RuvB complex plays an important role in the rescue of blocked DNA replication forks via replication fork reversal (RFR). RuvA specifically binds to HJ cruciform DNA, conferring on it an open structure. The RuvB hexamer acts as an ATP-dependent pump, pulling dsDNA into and through the RuvAB complex. RuvB forms 2 homohexamers on either side of HJ DNA bound by 1 or 2 RuvA tetramers; 4 subunits per hexamer contact DNA at a time. Coordinated motions by a converter formed by DNA-disengaged RuvB subunits stimulates ATP hydrolysis and nucleotide exchange. Immobilization of the converter enables RuvB to convert the ATP-contained energy into a lever motion, pulling 2 nucleotides of DNA out of the RuvA tetramer per ATP hydrolyzed, thus driving DNA branch migration. The RuvB motors rotate together with the DNA substrate, which together with the progressing nucleotide cycle form the mechanistic basis for DNA recombination by continuous HJ branch migration. Branch migration allows RuvC to scan DNA until it finds its consensus sequence, where it cleaves and resolves cruciform DNA. The protein is Holliday junction branch migration complex subunit RuvB of Bacillus cereus (strain G9842).